We begin with the raw amino-acid sequence, 155 residues long: D-aminoacyl-tRNA deacylase (155 aa).

The Gly-cisPro motif, important for rejection of L-amino acids signature appears at 147 to 148 (GP).

The protein belongs to the DTD family. Homodimer.

The protein localises to the cytoplasm. It carries out the reaction glycyl-tRNA(Ala) + H2O = tRNA(Ala) + glycine + H(+). The enzyme catalyses a D-aminoacyl-tRNA + H2O = a tRNA + a D-alpha-amino acid + H(+). In terms of biological role, an aminoacyl-tRNA editing enzyme that deacylates mischarged D-aminoacyl-tRNAs. Also deacylates mischarged glycyl-tRNA(Ala), protecting cells against glycine mischarging by AlaRS. Acts via tRNA-based rather than protein-based catalysis; rejects L-amino acids rather than detecting D-amino acids in the active site. By recycling D-aminoacyl-tRNA to D-amino acids and free tRNA molecules, this enzyme counteracts the toxicity associated with the formation of D-aminoacyl-tRNA entities in vivo and helps enforce protein L-homochirality. The sequence is that of D-aminoacyl-tRNA deacylase from Corynebacterium urealyticum (strain ATCC 43042 / DSM 7109).